Consider the following 514-residue polypeptide: Prespore vesicle protein (514 aa).

The N-terminal stretch at 1–18 (MRLYLLSLILVFYASVSS) is a signal peptide. Follistatin-like domains follow at residues 40 to 62 (LCGTHYCPPGSTCESKHGHYICR) and 240 to 262 (TCETKKCEASQVCIMVNGDAQCI). The span at 285 to 297 (QRNAKPAQQQRSA) shows a compositional bias: polar residues. Positions 285-514 (QRNAKPAQQQ…QARPATQKRN (230 aa)) are disordered. Composition is skewed to low complexity over residues 328 to 391 (QHNA…HTAA), 398 to 413 (AAQQHAKPAAHGAKPA), and 424 to 457 (AAQQHAKPAAHTAAKPVQHNAAQQHAKPAAKPAK). A compositionally biased stretch (polar residues) spans 480 to 508 (RIRQQNLVKQAAQKKQTSQRAASKNQARP).

This is Prespore vesicle protein (psvA) from Dictyostelium discoideum (Social amoeba).